The following is a 923-amino-acid chain: Leucine--tRNA ligase (923 aa).

A 'HIGH' region motif is present at residues 41–52 (PYPSGEGLHVGH). The short motif at 698-702 (KMSKS) is the 'KMSKS' region element. Residue Lys701 participates in ATP binding.

This sequence belongs to the class-I aminoacyl-tRNA synthetase family.

Its subcellular location is the cytoplasm. It catalyses the reaction tRNA(Leu) + L-leucine + ATP = L-leucyl-tRNA(Leu) + AMP + diphosphate. The protein is Leucine--tRNA ligase of Amoebophilus asiaticus (strain 5a2).